The chain runs to 552 residues: Rhodopsin kinase GRK7 (552 aa).

Position 36 is a phosphoserine; by PKA (Ser-36). One can recognise an RGS domain in the interval 56-176 (FHSLCEQQPI…LASPFYDKFL (121 aa)). Positions 191–454 (FEEFRVLGKG…SDDPRKHHFF (264 aa)) constitute a Protein kinase domain. ATP-binding positions include 197-205 (LGKGGFGEV) and Lys-220. The Proton acceptor role is filled by Asp-316. Positions 455 to 520 (KTINFPRLEA…GAVPIAWQEE (66 aa)) constitute an AGC-kinase C-terminal domain. Cys-549 carries the post-translational modification Cysteine methyl ester. The S-geranylgeranyl cysteine moiety is linked to residue Cys-549. Positions 550-552 (LLL) are cleaved as a propeptide — removed in mature form.

It belongs to the protein kinase superfamily. AGC Ser/Thr protein kinase family. GPRK subfamily. In terms of assembly, interacts (when prenylated) with PDE6D; this promotes release from membranes. In terms of processing, autophosphorylated in vitro at Ser-490. Phosphorylation at Ser-36 is regulated by light and activated by cAMP.

The protein localises to the membrane. The enzyme catalyses L-threonyl-[rhodopsin] + ATP = O-phospho-L-threonyl-[rhodopsin] + ADP + H(+). It carries out the reaction L-seryl-[rhodopsin] + ATP = O-phospho-L-seryl-[rhodopsin] + ADP + H(+). Its activity is regulated as follows. Inhibited by phosphorylation of Ser-36. Retina-specific kinase involved in the shutoff of the photoresponse and adaptation to changing light conditions via cone opsin phosphorylation, including rhodopsin (RHO). The chain is Rhodopsin kinase GRK7 (GRK7) from Bos taurus (Bovine).